The primary structure comprises 342 residues: Heat-inducible transcription repressor HrcA (342 aa).

The protein belongs to the HrcA family.

In terms of biological role, negative regulator of class I heat shock genes (grpE-dnaK-dnaJ and groELS operons). Prevents heat-shock induction of these operons. In Mesoplasma florum (strain ATCC 33453 / NBRC 100688 / NCTC 11704 / L1) (Acholeplasma florum), this protein is Heat-inducible transcription repressor HrcA.